The following is a 1080-amino-acid chain: Histone deacetylase 4 (1080 aa).

Disordered stretches follow at residues 1–25 (MSSQ…PPRV), 132–165 (KLEQ…ESAV), and 205–312 (TQHS…ISAE). Residues 132–162 (KLEQHRQEQELEKQHREQKLQQLKNKEKGKE) show a composition bias toward basic and acidic residues. A compositionally biased stretch (polar residues) spans 205 to 224 (TQHSSLDQSSPPQSGVSGTY). 2 stretches are compositionally biased toward basic and acidic residues: residues 233–244 (DSKDDFPLRKTA) and 258–273 (KVAE…RKDG). Over residues 289–312 (SACNSAPGSGPSSPNNSSNNISAE) the composition is skewed to low complexity. Residues 348–353 (PSLPNI) carry the PxLPxI/L motif. Disordered stretches follow at residues 506-527 (KPNE…ELRE), 558-579 (EPIE…GQRQ), and 622-646 (PLSR…PTKP). The segment covering 509-527 (EPARQHESHPEETEEELRE) has biased composition (basic and acidic residues). Residues 560 to 571 (IESDEEEAEPQQ) are compositionally biased toward acidic residues. Positions 625 to 637 (RAQSSPASATFPM) are enriched in polar residues. Positions 651–1080 (GLVYDTLMLK…DEPMEEEPPL (430 aa)) are histone deacetylase. Cys-663, Cys-665, His-671, and Cys-747 together coordinate Zn(2+). Residue His-799 is part of the active site. A disordered region spans residues 1055-1080 (MASLSVGVKPAEKRPDDEPMEEEPPL).

Belongs to the histone deacetylase family. HD type 2 subfamily.

The protein localises to the nucleus. The enzyme catalyses N(6)-acetyl-L-lysyl-[histone] + H2O = L-lysyl-[histone] + acetate. Functionally, responsible for the deacetylation of lysine residues on the N-terminal part of the core histones (H2A, H2B, H3 and H4). Histone deacetylation gives a tag for epigenetic repression and plays an important role in transcriptional regulation, cell cycle progression and developmental events. Histone deacetylases act via the formation of large multiprotein complexes. The polypeptide is Histone deacetylase 4 (HDAC4) (Gallus gallus (Chicken)).